A 286-amino-acid chain; its full sequence is uncharacterized protein (286 aa).

The AB hydrolase-1 domain maps to 26–268 (PLIILCHGFC…DACHYDIYEG (243 aa)).

This sequence belongs to the AB hydrolase superfamily.

This is an uncharacterized protein from Escherichia coli.